The following is a 245-amino-acid chain: Cuticle protein (245 aa).

One can recognise a Chitin-binding type R&amp;R domain in the interval 25–86 (VSYAAAPALV…TGDSKSQQES (62 aa)). Positions 79–100 (DSKSQQESRSGDVVQGSYSVVD) are disordered. 3 repeat units span residues 92-95 (VQGS), 108-111 (VDYT), and 118-121 (FNAV).

Component of the cuticle of African malaria mosquito. In Anopheles gambiae (African malaria mosquito), this protein is Cuticle protein (Ccp84Ab).